Here is a 193-residue protein sequence, read N- to C-terminus: ATP-dependent Clp protease proteolytic subunit (193 aa).

The Nucleophile role is filled by Ser98. Residue His123 is part of the active site.

It belongs to the peptidase S14 family. Fourteen ClpP subunits assemble into 2 heptameric rings which stack back to back to give a disk-like structure with a central cavity, resembling the structure of eukaryotic proteasomes.

The protein resides in the cytoplasm. The catalysed reaction is Hydrolysis of proteins to small peptides in the presence of ATP and magnesium. alpha-casein is the usual test substrate. In the absence of ATP, only oligopeptides shorter than five residues are hydrolyzed (such as succinyl-Leu-Tyr-|-NHMec, and Leu-Tyr-Leu-|-Tyr-Trp, in which cleavage of the -Tyr-|-Leu- and -Tyr-|-Trp bonds also occurs).. Its function is as follows. Cleaves peptides in various proteins in a process that requires ATP hydrolysis. Has a chymotrypsin-like activity. Plays a major role in the degradation of misfolded proteins. The protein is ATP-dependent Clp protease proteolytic subunit of Mannheimia succiniciproducens (strain KCTC 0769BP / MBEL55E).